The sequence spans 140 residues: Nucleoside diphosphate kinase (140 aa).

ATP is bound by residues Lys11, Phe59, Arg87, Thr93, Arg104, and Asn114. His117 serves as the catalytic Pros-phosphohistidine intermediate.

This sequence belongs to the NDK family. As to quaternary structure, homotetramer. It depends on Mg(2+) as a cofactor.

The protein resides in the cytoplasm. The enzyme catalyses a 2'-deoxyribonucleoside 5'-diphosphate + ATP = a 2'-deoxyribonucleoside 5'-triphosphate + ADP. The catalysed reaction is a ribonucleoside 5'-diphosphate + ATP = a ribonucleoside 5'-triphosphate + ADP. Functionally, major role in the synthesis of nucleoside triphosphates other than ATP. The ATP gamma phosphate is transferred to the NDP beta phosphate via a ping-pong mechanism, using a phosphorylated active-site intermediate. This is Nucleoside diphosphate kinase from Methylobacterium sp. (strain 4-46).